A 166-amino-acid chain; its full sequence is UPF0304 protein VV1_2093 (166 aa).

The protein belongs to the UPF0304 family.

The polypeptide is UPF0304 protein VV1_2093 (Vibrio vulnificus (strain CMCP6)).